Consider the following 833-residue polypeptide: Leucine--tRNA ligase (833 aa).

The 'HIGH' region signature appears at 41–52 (PYPSGAGLHVGH). Positions 610–614 (KMSKS) match the 'KMSKS' region motif. Lysine 613 is a binding site for ATP.

Belongs to the class-I aminoacyl-tRNA synthetase family.

Its subcellular location is the cytoplasm. It carries out the reaction tRNA(Leu) + L-leucine + ATP = L-leucyl-tRNA(Leu) + AMP + diphosphate. This chain is Leucine--tRNA ligase, found in Streptococcus suis (strain 98HAH33).